A 195-amino-acid polypeptide reads, in one-letter code: Orotate phosphoribosyltransferase (195 aa).

5-phospho-alpha-D-ribose 1-diphosphate is bound by residues Arg87, Lys91, and 112-120 (DDVATTGGS). Orotate-binding residues include Thr116 and Arg144.

It belongs to the purine/pyrimidine phosphoribosyltransferase family. PyrE subfamily. As to quaternary structure, homodimer. Requires Mg(2+) as cofactor.

It catalyses the reaction orotidine 5'-phosphate + diphosphate = orotate + 5-phospho-alpha-D-ribose 1-diphosphate. It functions in the pathway pyrimidine metabolism; UMP biosynthesis via de novo pathway; UMP from orotate: step 1/2. Functionally, catalyzes the transfer of a ribosyl phosphate group from 5-phosphoribose 1-diphosphate to orotate, leading to the formation of orotidine monophosphate (OMP). The chain is Orotate phosphoribosyltransferase from Sulfurisphaera tokodaii (strain DSM 16993 / JCM 10545 / NBRC 100140 / 7) (Sulfolobus tokodaii).